The primary structure comprises 218 residues: Pyridoxine/pyridoxamine 5'-phosphate oxidase (218 aa).

Substrate is bound by residues 12-15 (RMSY) and Arg70. Residues 65-70 (RTVLLR), 80-81 (YT), Lys87, and Gln109 each bind FMN. Substrate-binding residues include Tyr127, Arg131, and Ser135. FMN-binding positions include 145 to 146 (QS) and Trp191. 197–199 (RLH) provides a ligand contact to substrate. Arg201 serves as a coordination point for FMN.

The protein belongs to the pyridoxamine 5'-phosphate oxidase family. Homodimer. Requires FMN as cofactor.

It catalyses the reaction pyridoxamine 5'-phosphate + O2 + H2O = pyridoxal 5'-phosphate + H2O2 + NH4(+). The enzyme catalyses pyridoxine 5'-phosphate + O2 = pyridoxal 5'-phosphate + H2O2. Its pathway is cofactor metabolism; pyridoxal 5'-phosphate salvage; pyridoxal 5'-phosphate from pyridoxamine 5'-phosphate: step 1/1. It participates in cofactor metabolism; pyridoxal 5'-phosphate salvage; pyridoxal 5'-phosphate from pyridoxine 5'-phosphate: step 1/1. Functionally, catalyzes the oxidation of either pyridoxine 5'-phosphate (PNP) or pyridoxamine 5'-phosphate (PMP) into pyridoxal 5'-phosphate (PLP). The sequence is that of Pyridoxine/pyridoxamine 5'-phosphate oxidase from Acinetobacter baylyi (strain ATCC 33305 / BD413 / ADP1).